Reading from the N-terminus, the 457-residue chain is Zinc finger protein ZPR1 (457 aa).

A compositionally biased stretch (polar residues) spans 1–13; it reads MSTVSDPNSSNPP. Residues 1–21 form a disordered region; sequence MSTVSDPNSSNPPESAGNIRP. 2 C4-type zinc fingers span residues 43 to 75 and 261 to 293; these read CMNC…CDHC and CPSC…CGAC. The tract at residues 414 to 457 is disordered; it reads VQSLSDDDSEPDDKLTVERYDRSYEDNEDLGLNDMKTEGYEEKA. 2 stretches are compositionally biased toward basic and acidic residues: residues 425–438 and 448–457; these read DDKL…RSYE and MKTEGYEEKA.

The protein belongs to the ZPR1 family.

Might mediate EGFR and FGFR signal transduction cascades required for lumen formation in tracheal cells. The protein is Zinc finger protein ZPR1 of Drosophila melanogaster (Fruit fly).